A 216-amino-acid chain; its full sequence is Small ribosomal subunit protein uS3c (216 aa).

One can recognise a KH type-2 domain in the interval Ile43–Thr118.

This sequence belongs to the universal ribosomal protein uS3 family. In terms of assembly, part of the 30S ribosomal subunit.

The protein localises to the plastid. It is found in the chloroplast. In Phaseolus angularis (Azuki bean), this protein is Small ribosomal subunit protein uS3c (rps3).